Here is a 1998-residue protein sequence, read N- to C-terminus: Receptor-type tyrosine-protein phosphatase beta (1998 aa).

The signal sequence occupies residues 1–22 (MLRHGALTALWITLSVVQTGVA). Fibronectin type-III domains follow at residues 23–109 (EQVK…VLQT), 113–206 (PPAR…VPSP), 207–291 (VKDL…TAPM), 292–384 (EVSN…VRNL), 378–466 (PEKV…QGRT), 470–556 (AVLQ…TVPA), 557–642 (QVTD…EGRT), 643–733 (VPSS…TVPD), 734–821 (KVQG…TIPE), 822–913 (PVKD…TVKN), 908–994 (PSTV…LGQT), 995–1088 (VPAS…VPAA), 1086–1173 (PAAV…GRTV), 1176–1263 (AVNH…TAPS), 1264–1357 (PPSL…TKPD), 1358–1449 (KIQN…IDRP), and 1449–1551 (PPQP…KLGA). At 23–1622 (EQVKCNFTLL…ESEPLFGVIE (1600 aa)) the chain is on the extracellular side. Asn28, Asn53, Asn75, Asn173, Asn199, and Asn268 each carry an N-linked (GlcNAc...) asparagine glycan. N-linked (GlcNAc...) asparagine glycans are attached at residues Asn415, Asn422, Asn480, Asn575, Asn599, and Asn653. Asn830 is a glycosylation site (N-linked (GlcNAc...) asparagine). Residues Asn1041, Asn1097, Asn1164, Asn1186, Asn1213, Asn1275, Asn1368, Asn1471, Asn1475, and Asn1519 are each glycosylated (N-linked (GlcNAc...) asparagine). The chain crosses the membrane as a helical span at residues 1623-1643 (GVSAGLFLIGMLVALVAFFIC). Residues 1644–1997 (RQKASHSRER…EYHRDAIYSR (354 aa)) lie on the Cytoplasmic side of the membrane. The region spanning 1704–1964 (LSKEYEDLKD…VYLHQCVRDV (261 aa)) is the Tyrosine-protein phosphatase domain. Substrate-binding positions include Asp1871, 1905 to 1911 (CSAGVGR), and Gln1949. Cys1905 functions as the Phosphocysteine intermediate in the catalytic mechanism. Tyr1982 bears the Phosphotyrosine mark.

The protein belongs to the protein-tyrosine phosphatase family. Receptor class 3 subfamily. Monomer. Interacts with TEK. Interacts via fibronectin type-III 17 domain with CDH5. Detected in a complex with CNTN1 and NRCAM. Interacts (phosphorylated form) with FYN and GRB2. Interacts with IGFBP2. Expression is very high in the vasculature of lung, spleen, and kidney, as well as in the heart valves, and is also present in the endothelium of arterioles and venules. Also expressed in tumor vasculature.

It is found in the membrane. The enzyme catalyses O-phospho-L-tyrosyl-[protein] + H2O = L-tyrosyl-[protein] + phosphate. In terms of biological role, plays an important role in blood vessel remodeling and angiogenesis. Not necessary for the initial formation of blood vessels, but is essential for their maintenance and remodeling. Can induce dephosphorylation of TEK/TIE2, CDH5/VE-cadherin and KDR/VEGFR-2. Regulates angiopoietin-TIE2 signaling in endothelial cells. Acts as a negative regulator of TIE2, and controls TIE2 driven endothelial cell proliferation, which in turn affects blood vessel remodeling during embryonic development and determines blood vessel size during perinatal growth. Essential for the maintenance of endothelial cell contact integrity and for the adhesive function of VE-cadherin in endothelial cells and this requires the presence of plakoglobin. This chain is Receptor-type tyrosine-protein phosphatase beta (Ptprb), found in Mus musculus (Mouse).